Here is a 227-residue protein sequence, read N- to C-terminus: PKHD-type hydroxylase Bphy_5374 (227 aa).

The Fe2OG dioxygenase domain maps to K79 to S179. Positions 97, 99, and 160 each coordinate Fe cation. R170 lines the 2-oxoglutarate pocket.

It depends on Fe(2+) as a cofactor. Requires L-ascorbate as cofactor.

In Paraburkholderia phymatum (strain DSM 17167 / CIP 108236 / LMG 21445 / STM815) (Burkholderia phymatum), this protein is PKHD-type hydroxylase Bphy_5374.